The primary structure comprises 150 residues: Transcriptional regulator MraZ (150 aa).

SpoVT-AbrB domains follow at residues 7–58 (KEQH…EPEI) and 87–130 (LDSV…SPEK).

Belongs to the MraZ family. Forms oligomers.

It localises to the cytoplasm. The protein localises to the nucleoid. In Chlorobium phaeobacteroides (strain BS1), this protein is Transcriptional regulator MraZ.